The sequence spans 461 residues: Putative aldehyde dehydrogenase FUS7 (461 aa).

220 to 225 contributes to the NAD(+) binding site; sequence GSTATG. Active-site residues include Glu242 and Cys276.

Belongs to the aldehyde dehydrogenase family.

The enzyme catalyses an aldehyde + NAD(+) + H2O = a carboxylate + NADH + 2 H(+). Putative aldehyde dehydrogenase; part of the gene cluster that mediates the biosynthesis of the mycotoxin fusarin C. Within the cluster, FUS1, FUS2, FUS8 and FUS9 are sufficient for fusarin production. The other FUS cluster members are not essential for fusarin C biosynthesis. The sequence is that of Putative aldehyde dehydrogenase FUS7 from Gibberella moniliformis (strain M3125 / FGSC 7600) (Maize ear and stalk rot fungus).